The primary structure comprises 363 residues: tRNA U34 carboxymethyltransferase (363 aa).

Carboxy-S-adenosyl-L-methionine is bound by residues Lys-101, Trp-134, Lys-139, Gly-159, 181–183 (DPS), 221–222 (LE), Met-237, Tyr-241, and Arg-356.

Belongs to the class I-like SAM-binding methyltransferase superfamily. CmoB family. In terms of assembly, homotetramer.

It carries out the reaction carboxy-S-adenosyl-L-methionine + 5-hydroxyuridine(34) in tRNA = 5-carboxymethoxyuridine(34) in tRNA + S-adenosyl-L-homocysteine + H(+). Its function is as follows. Catalyzes carboxymethyl transfer from carboxy-S-adenosyl-L-methionine (Cx-SAM) to 5-hydroxyuridine (ho5U) to form 5-carboxymethoxyuridine (cmo5U) at position 34 in tRNAs. The polypeptide is tRNA U34 carboxymethyltransferase (Psychrobacter cryohalolentis (strain ATCC BAA-1226 / DSM 17306 / VKM B-2378 / K5)).